Reading from the N-terminus, the 216-residue chain is RNA pyrophosphohydrolase (216 aa).

A Nudix hydrolase domain is found at 6 to 149; sequence GFRPNVGIIL…KRDVYQLALT (144 aa). The Nudix box motif lies at 38–59; that stretch reads GGIKYGETPMQAMYRELHEETG. Residues 159–188 are disordered; the sequence is AQRTDKSRGPRAPRYPRVANGHAASEAPAA.

This sequence belongs to the Nudix hydrolase family. RppH subfamily. The cofactor is a divalent metal cation.

Its function is as follows. Accelerates the degradation of transcripts by removing pyrophosphate from the 5'-end of triphosphorylated RNA, leading to a more labile monophosphorylated state that can stimulate subsequent ribonuclease cleavage. This chain is RNA pyrophosphohydrolase, found in Burkholderia mallei (strain NCTC 10247).